Here is a 405-residue protein sequence, read N- to C-terminus: Low-salt glycan biosynthesis sulfotransferase Agl7 (405 aa).

Ca(2+) contacts are provided by D24, D201, and H202.

The protein belongs to the sulfatase family. The cofactor is Ca(2+).

It functions in the pathway protein modification; protein glycosylation. Its pathway is cell surface structure biogenesis; S-layer biogenesis. Its function is as follows. Involved in N-glycan biosynthetic pathway that takes place under low-salt conditions (1.75 M instead of 3.4 M). Participates in the formation of the tetrasaccharide present at 'Asn-532' of S-layer glycoprotein Csg, consisting of a sulfated hexose, 2 hexoses and rhamnose. Mediates sulfation of sugar 1 in the tetrasaccharide. In Haloferax volcanii (strain ATCC 29605 / DSM 3757 / JCM 8879 / NBRC 14742 / NCIMB 2012 / VKM B-1768 / DS2) (Halobacterium volcanii), this protein is Low-salt glycan biosynthesis sulfotransferase Agl7.